Here is a 444-residue protein sequence, read N- to C-terminus: tRNA-2-methylthio-N(6)-dimethylallyladenosine synthase (444 aa).

In terms of domain architecture, MTTase N-terminal spans 10–126 (SSFYIHTFGC…LAGLVAGLRE (117 aa)). Residues Cys19, Cys55, Cys89, Cys163, Cys167, and Cys170 each coordinate [4Fe-4S] cluster. The 231-residue stretch at 149–379 (RAGSISAFLP…IELQNAISRE (231 aa)) folds into the Radical SAM core domain. The TRAM domain maps to 382–444 (QREIGKTVEV…TSATLSGEAV (63 aa)).

The protein belongs to the methylthiotransferase family. MiaB subfamily. Monomer. It depends on [4Fe-4S] cluster as a cofactor.

It is found in the cytoplasm. It catalyses the reaction N(6)-dimethylallyladenosine(37) in tRNA + (sulfur carrier)-SH + AH2 + 2 S-adenosyl-L-methionine = 2-methylsulfanyl-N(6)-dimethylallyladenosine(37) in tRNA + (sulfur carrier)-H + 5'-deoxyadenosine + L-methionine + A + S-adenosyl-L-homocysteine + 2 H(+). In terms of biological role, catalyzes the methylthiolation of N6-(dimethylallyl)adenosine (i(6)A), leading to the formation of 2-methylthio-N6-(dimethylallyl)adenosine (ms(2)i(6)A) at position 37 in tRNAs that read codons beginning with uridine. This is tRNA-2-methylthio-N(6)-dimethylallyladenosine synthase from Chlorobaculum tepidum (strain ATCC 49652 / DSM 12025 / NBRC 103806 / TLS) (Chlorobium tepidum).